The chain runs to 227 residues: 7-cyano-7-deazaguanine synthase (227 aa).

7-17 (LSGGMDSLVTT) serves as a coordination point for ATP. Zn(2+) contacts are provided by Cys187, Cys195, Cys198, and Cys201.

It belongs to the QueC family. The cofactor is Zn(2+).

The enzyme catalyses 7-carboxy-7-deazaguanine + NH4(+) + ATP = 7-cyano-7-deazaguanine + ADP + phosphate + H2O + H(+). It participates in purine metabolism; 7-cyano-7-deazaguanine biosynthesis. Functionally, catalyzes the ATP-dependent conversion of 7-carboxy-7-deazaguanine (CDG) to 7-cyano-7-deazaguanine (preQ(0)). This is 7-cyano-7-deazaguanine synthase from Chlorobium phaeovibrioides (strain DSM 265 / 1930) (Prosthecochloris vibrioformis (strain DSM 265)).